The following is an 885-amino-acid chain: MSFFAKLQGSDSESSSGSESEESILSGSEGERQDKKLAAQKKQQKSKASMFLNSEESESEEESSDEDEEEMSDSDDERQAVANKFLNDAASSDEESEEEDKIIVLSAKDKRFAEMEAAIHSIQNAVKNTDWVLASSELDKLFRFIARHLVTIVASPIPAEGHIPPRFLETLVSLEADVAKTLAAEKSAPKKMAPAKAKAVNGIRQTLKKKSKEFDGVLKTYNEDPEAYTAAYEKANAAPAAPKPKKAAVTTPGEGEDDEFMTIGKGGKTLNLTADGVFKTLREIFEARGRKNTDRAETIKILTKLLEVSETTYQKIRVLLALVPARLDYSQHLVSIPQESWVTALQEFDQLISILIAEPDYLVQETVGEYDDLVERTPEVVDGKKQKVLIAGSLISLLESLDSELTKTLQHTDAHEKGDEYIDRLKHEAPLYTTIVKAQTLFEREQLSDNIARTVIRRLEHIYAKPDIIIEHFESKATQAAAGLKSEITPFDVKRDASGVIHDLAVFIYQSDAPVLRARAILYHIFNQALHGRYHQARDLLLMSHLQDTISHADVTTQILYNRAVMQVGLAAFRLGFIPECQTILSEMFSTLRQKELLAQSVQRYNIQLSPEQELLEKRRLLPFHMHLNVELLEAAYLTSCMLVEIPLLASVDTEEQRRRVTSKTFKRLLDMADRQAFMGPPENTRDHIIKASQALQAGEWEKARDLIVSIKVWSLLDNAAEVKDILAKKIQEEGLRTSLFTYAAYYDSLSLSHLASTFNLPVGRITSIISRMIYTDELAASLDQIDGVVIFHRVEQSEVQRLAQQLAERTASMLEQNEKTLDVKLGNQGQGQDRDTRAVGGEGGRQQGERRGGRGTYRGRGGRGGRGGFNQGLGTTMGRRVTAQ.

A disordered region spans residues 1-81; the sequence is MSFFAKLQGS…SDSDDERQAV (81 aa). Over residues 9–28 the composition is skewed to low complexity; sequence GSDSESSSGSESEESILSGS. Residues 55-76 show a composition bias toward acidic residues; that stretch reads EESESEEESSDEDEEEMSDSDD. The PCI domain maps to 624–797; sequence FHMHLNVELL…GVVIFHRVEQ (174 aa). Residues 822-885 form a disordered region; it reads LDVKLGNQGQ…TTMGRRVTAQ (64 aa). Over residues 855–872 the composition is skewed to gly residues; it reads RGTYRGRGGRGGRGGFNQ.

The protein belongs to the eIF-3 subunit C family. In terms of assembly, component of the eukaryotic translation initiation factor 3 (eIF-3) complex.

It localises to the cytoplasm. Its function is as follows. Component of the eukaryotic translation initiation factor 3 (eIF-3) complex, which is involved in protein synthesis of a specialized repertoire of mRNAs and, together with other initiation factors, stimulates binding of mRNA and methionyl-tRNAi to the 40S ribosome. The eIF-3 complex specifically targets and initiates translation of a subset of mRNAs involved in cell proliferation. The protein is Eukaryotic translation initiation factor 3 subunit C of Cryptococcus neoformans var. neoformans serotype D (strain B-3501A) (Filobasidiella neoformans).